A 247-amino-acid chain; its full sequence is Ubiquinone biosynthesis O-methyltransferase (247 aa).

Residues Arg-39, Gly-70, Asp-91, and Met-134 each coordinate S-adenosyl-L-methionine.

It belongs to the methyltransferase superfamily. UbiG/COQ3 family.

The catalysed reaction is a 3-demethylubiquinol + S-adenosyl-L-methionine = a ubiquinol + S-adenosyl-L-homocysteine + H(+). It carries out the reaction a 3-(all-trans-polyprenyl)benzene-1,2-diol + S-adenosyl-L-methionine = a 2-methoxy-6-(all-trans-polyprenyl)phenol + S-adenosyl-L-homocysteine + H(+). It functions in the pathway cofactor biosynthesis; ubiquinone biosynthesis. In terms of biological role, O-methyltransferase that catalyzes the 2 O-methylation steps in the ubiquinone biosynthetic pathway. This chain is Ubiquinone biosynthesis O-methyltransferase, found in Cereibacter sphaeroides (strain ATCC 17025 / ATH 2.4.3) (Rhodobacter sphaeroides).